Here is a 237-residue protein sequence, read N- to C-terminus: Ribose-5-phosphate isomerase A (237 aa).

Substrate is bound by residues 32 to 35, 85 to 88, and 99 to 102; these read TGRT, DGAD, and KGGG. The active-site Proton acceptor is Glu108. Arg126 is a substrate binding site.

It belongs to the ribose 5-phosphate isomerase family. Homodimer.

It carries out the reaction aldehydo-D-ribose 5-phosphate = D-ribulose 5-phosphate. It participates in carbohydrate degradation; pentose phosphate pathway; D-ribose 5-phosphate from D-ribulose 5-phosphate (non-oxidative stage): step 1/1. In terms of biological role, catalyzes the reversible conversion of ribose-5-phosphate to ribulose 5-phosphate. In Aeropyrum pernix (strain ATCC 700893 / DSM 11879 / JCM 9820 / NBRC 100138 / K1), this protein is Ribose-5-phosphate isomerase A.